The following is a 155-amino-acid chain: Small ribosomal subunit protein uS7cz/uS7cy (155 aa).

This sequence belongs to the universal ribosomal protein uS7 family. Part of the 30S ribosomal subunit.

Its subcellular location is the plastid. The protein localises to the chloroplast. Its function is as follows. One of the primary rRNA binding proteins, it binds directly to 16S rRNA where it nucleates assembly of the head domain of the 30S subunit. In Chloranthus spicatus (Chulantree), this protein is Small ribosomal subunit protein uS7cz/uS7cy (rps7-A).